The following is a 706-amino-acid chain: Termination factor NPH-I homolog (706 aa).

One can recognise a Helicase ATP-binding domain in the interval I62–R227. An ATP-binding site is contributed by H75–T82. The DEAH box motif lies at D168–H171. Residues Q417–L599 enclose the Helicase C-terminal domain.

Belongs to the DEAD box helicase family. DEAH subfamily. In terms of assembly, part of the viral DNA-directed RNA polymerase that consists of 8 polII-like subunits (RPB1, RPB2, RPB3, RPB5, RPB6, RPB7, RPB9, RPB10), a capping enzyme and a termination factor.

The protein localises to the virion. Its function is as follows. Putative DNA-dependent ATPase required for providing the needed energy to achieve the termination of early transcripts. The chain is Termination factor NPH-I homolog from African swine fever virus (isolate Warthog/Namibia/Wart80/1980) (ASFV).